Here is a 229-residue protein sequence, read N- to C-terminus: Sperm flagellar protein 1 (229 aa).

Residues 7 to 115 (EETMQELYTW…TLRQKIEEKQ (109 aa)) form the Calponin-homology (CH) domain. The segment at 122–169 (ADLSQDQATQNNGNTHSDKGYKSNGTELSPRQGARVDPASKTHQGYAQ) is disordered. The segment covering 123-136 (DLSQDQATQNNGNT) has biased composition (polar residues). An essential for homodimerization and microtubule bundling activity region spans residues 178–229 (RFQLAEKEQTLILSQETIQILQAKLRRLEQLLLLKNVRIDDLTRRLQELEKK).

In terms of assembly, homodimer.

Its subcellular location is the cytoplasm. It localises to the cytoskeleton. The protein resides in the cilium axoneme. It is found in the apical cell membrane. Its function is as follows. Microtubule-associated protein involved in the stabilization of microtubules along the axis of migration during radial intercalation. Promotes the establishment and stabilization of an axis of microtubules required for the active migration of cells into the outer epithelium. Microtubule-associated protein that promotes microtubule bundling and stabilizes microtubules against depolymerization in response to cold shock. Essential for ciliary central apparatus formation which requires both its microtubule-binding and bundling activities. Regulates planar cell polarity signaling pathway and asymmetric microtubule accumulation in ciliated epithelia. This chain is Sperm flagellar protein 1, found in Xenopus laevis (African clawed frog).